The sequence spans 332 residues: Formamidase (332 aa).

Residues 14–259 (FLAALIQYPV…WEIVTAEVYP (246 aa)) enclose the CN hydrolase domain. Catalysis depends on Glu-60, which acts as the Proton acceptor. The active-site Proton donor is the Lys-132. The active-site Nucleophile is the Cys-165.

It belongs to the carbon-nitrogen hydrolase superfamily. Aliphatic amidase family.

The catalysed reaction is formamide + H2O = formate + NH4(+). Is an aliphatic amidase with a restricted substrate specificity, as it only hydrolyzes formamide. The chain is Formamidase from Bacillus cereus (strain Q1).